Consider the following 256-residue polypeptide: Pimeloyl-[acyl-carrier protein] methyl ester esterase (256 aa).

The 228-residue stretch at histidine 15–proline 242 folds into the AB hydrolase-1 domain. Substrate is bound by residues tryptophan 22, serine 82–leucine 83, and phenylalanine 143–glutamine 147. Serine 82 acts as the Nucleophile in catalysis. Catalysis depends on residues aspartate 207 and histidine 235. Histidine 235 contacts substrate.

The protein belongs to the AB hydrolase superfamily. Carboxylesterase BioH family. As to quaternary structure, monomer.

The protein localises to the cytoplasm. It carries out the reaction 6-carboxyhexanoyl-[ACP] methyl ester + H2O = 6-carboxyhexanoyl-[ACP] + methanol + H(+). It participates in cofactor biosynthesis; biotin biosynthesis. Functionally, the physiological role of BioH is to remove the methyl group introduced by BioC when the pimeloyl moiety is complete. It allows to synthesize pimeloyl-ACP via the fatty acid synthetic pathway through the hydrolysis of the ester bonds of pimeloyl-ACP esters. The sequence is that of Pimeloyl-[acyl-carrier protein] methyl ester esterase from Shigella dysenteriae serotype 1 (strain Sd197).